We begin with the raw amino-acid sequence, 122 residues long: Ribonuclease P protein component 1 (122 aa).

Belongs to the eukaryotic/archaeal RNase P protein component 1 family. In terms of assembly, consists of a catalytic RNA component and at least 4-5 protein subunits.

It localises to the cytoplasm. It carries out the reaction Endonucleolytic cleavage of RNA, removing 5'-extranucleotides from tRNA precursor.. Functionally, part of ribonuclease P, a protein complex that generates mature tRNA molecules by cleaving their 5'-ends. The protein is Ribonuclease P protein component 1 of Thermococcus sibiricus (strain DSM 12597 / MM 739).